Reading from the N-terminus, the 194-residue chain is Naphthalene 1,2-dioxygenase system, small oxygenase component (194 aa).

It belongs to the bacterial ring-hydroxylating dioxygenase beta subunit family. In terms of assembly, the naphthalene dioxygenase (NDO) multicomponent enzyme system is composed of an electron transfer component and a dioxygenase component (iron sulfur protein (ISP)). The electron transfer component is composed of a ferredoxin reductase (NagAa) and a ferredoxin (NagAb), and the dioxygenase component is formed by a large alpha subunit (NagAc) and a small beta subunit (NagAd).

It participates in aromatic compound metabolism; naphthalene degradation. Functionally, component of the naphthalene dioxygenase (NDO) multicomponent enzyme system which catalyzes the incorporation of both atoms of molecular oxygen into naphthalene to form cis-(1R,2S)-dihydroxy-1,2-dihydronaphthalene. Also able to use styrene as substrate. The beta subunit seems to have a structural role in the holoenzyme. The chain is Naphthalene 1,2-dioxygenase system, small oxygenase component from Ralstonia sp.